Here is a 568-residue protein sequence, read N- to C-terminus: MSHSVEDIKSESRRLRGSLQQSLADAVTGALREDDQTLIKYHGSYQQDDRDIRDERRRQKLEPAYQFMIRTRTPGGVITPTQWLALDGIATRYANHSLRVTTRQAFQFHGVIKRELKATMQAINATLIDTLAACGDVNRNVQVAANPLLSQAHATLYADAARVSEHLLPNTRAYYEIWLDEERVSGSGSEEEPIYGERYLPRKFKIGFAAPPLNDVDVFANDLGFIAILRDGQLLGYNVSIGGGMGASHGDAETWPRVANVIGFVTRDQLLDIATAVVTTQRDFGNRAVRKRARFKYTIDDHGLDTIVAEIARRAGFALQPAQPFAFDHNGDRYGWVEGEDGRWHLTLSLPAGRIADTDTAAHLSGLRAIAQLNVGEFRMTPNQNLVIAGVPASERARVDALVAQYALDAGNRAATALARGAMACVALPTCGLAMAEAERYLPDFSAALQPLLQQHGLADTPIVLRVSGCPNGCSRPYLAEMALVGKAPGRYNLMLGGDRRGQRLNTLYRENITEPEILAALQPLLARYASEGDHANDEGFGDFLHRAGVIALPPYPTHRRLDLELLA.

Positions 425, 431, 470, and 474 each coordinate [4Fe-4S] cluster. Siroheme is bound at residue C474.

The protein belongs to the nitrite and sulfite reductase 4Fe-4S domain family. Alpha(8)-beta(8). The alpha component is a flavoprotein, the beta component is a hemoprotein. Requires siroheme as cofactor. It depends on [4Fe-4S] cluster as a cofactor.

The enzyme catalyses hydrogen sulfide + 3 NADP(+) + 3 H2O = sulfite + 3 NADPH + 4 H(+). It functions in the pathway sulfur metabolism; hydrogen sulfide biosynthesis; hydrogen sulfide from sulfite (NADPH route): step 1/1. In terms of biological role, component of the sulfite reductase complex that catalyzes the 6-electron reduction of sulfite to sulfide. This is one of several activities required for the biosynthesis of L-cysteine from sulfate. This is Sulfite reductase [NADPH] hemoprotein beta-component from Xanthomonas euvesicatoria pv. vesicatoria (strain 85-10) (Xanthomonas campestris pv. vesicatoria).